A 340-amino-acid polypeptide reads, in one-letter code: Methionine import ATP-binding protein MetN (340 aa).

One can recognise an ABC transporter domain in the interval 2–241 (IRIENLTKIY…PQSSVAKEFI (240 aa)). 38–45 (GLSGAGKS) is a binding site for ATP.

This sequence belongs to the ABC transporter superfamily. Methionine importer (TC 3.A.1.24) family. As to quaternary structure, the complex is composed of two ATP-binding proteins (MetN), two transmembrane proteins (MetI) and a solute-binding protein (MetQ).

Its subcellular location is the cell membrane. It catalyses the reaction L-methionine(out) + ATP + H2O = L-methionine(in) + ADP + phosphate + H(+). The catalysed reaction is D-methionine(out) + ATP + H2O = D-methionine(in) + ADP + phosphate + H(+). Functionally, part of the ABC transporter complex MetNIQ involved in methionine import. Responsible for energy coupling to the transport system. The protein is Methionine import ATP-binding protein MetN of Desulfitobacterium hafniense (strain Y51).